We begin with the raw amino-acid sequence, 226 residues long: 2-amino-5-formylamino-6-ribosylaminopyrimidin-4(3H)-one 5'-monophosphate deformylase (226 aa).

E29, H31, D40, and H108 together coordinate Fe cation.

Belongs to the creatininase superfamily. FAPy deformylase family. As to quaternary structure, homodimer. It depends on Fe(2+) as a cofactor. The cofactor is Zn(2+).

The enzyme catalyses 2-amino-5-formylamino-6-(5-phospho-D-ribosylamino)pyrimidin-4(3H)-one + H2O = 2,5-diamino-6-(1-D-ribosylamino)pyrimidin-4(3H)-one 5'-phosphate + formate + H(+). The protein operates within cofactor biosynthesis; coenzyme F420 biosynthesis. Its pathway is cofactor biosynthesis; riboflavin biosynthesis. Its function is as follows. Catalyzes the hydrolysis of the formamide of 2-amino-5-formylamino-6-ribosylamino-4(3H)-pyrimidinone 5'-monophosphate (FAPy) to form 2,5-diamino-6-ribosylamino-4(3H)-pyrimidinone 5'-phosphate (APy). The chain is 2-amino-5-formylamino-6-ribosylaminopyrimidin-4(3H)-one 5'-monophosphate deformylase from Methanocaldococcus vulcanius (strain ATCC 700851 / DSM 12094 / M7) (Methanococcus vulcanius).